A 72-amino-acid polypeptide reads, in one-letter code: Translation initiation factor IF-1 (72 aa).

In terms of domain architecture, S1-like spans 2–72 (AKEDVIEVEG…TRGRITYRYK (71 aa)). A Phosphotyrosine modification is found at Tyr-60.

Belongs to the IF-1 family. As to quaternary structure, component of the 30S ribosomal translation pre-initiation complex which assembles on the 30S ribosome in the order IF-2 and IF-3, IF-1 and N-formylmethionyl-tRNA(fMet); mRNA recruitment can occur at any time during PIC assembly.

The protein localises to the cytoplasm. Its function is as follows. One of the essential components for the initiation of protein synthesis. Stabilizes the binding of IF-2 and IF-3 on the 30S subunit to which N-formylmethionyl-tRNA(fMet) subsequently binds. Helps modulate mRNA selection, yielding the 30S pre-initiation complex (PIC). Upon addition of the 50S ribosomal subunit IF-1, IF-2 and IF-3 are released leaving the mature 70S translation initiation complex. In Halalkalibacterium halodurans (strain ATCC BAA-125 / DSM 18197 / FERM 7344 / JCM 9153 / C-125) (Bacillus halodurans), this protein is Translation initiation factor IF-1.